A 200-amino-acid chain; its full sequence is MAVRVSKAERQRLLREKINENPFYTDDELADMFGVSVQTIRLDRMELGIPEVRERIKNVAEENYRKVKTILGAEVVGELIDLELGKRGISIFEPTEDMVFVKTKIVKGQYIYSQAESLALSLIDAPAALIGVANIKYKYPVKVGDRLVAKAEVIRQRGNKYFVWVKIKVKEKEVFRGKFILVALEEDFLKKRSDTVEVGN.

This sequence belongs to the FapR family.

Its function is as follows. Transcriptional factor involved in regulation of membrane lipid biosynthesis by repressing genes involved in fatty acid and phospholipid metabolism. The polypeptide is Transcription factor FapR (Caldanaerobacter subterraneus subsp. tengcongensis (strain DSM 15242 / JCM 11007 / NBRC 100824 / MB4) (Thermoanaerobacter tengcongensis)).